The chain runs to 640 residues: Probable threonine--tRNA ligase, cytoplasmic (640 aa).

Residues 1 to 63 (MYEVKLKVEL…LKDCKLELMT (63 aa)) enclose the TGS domain.

Belongs to the class-II aminoacyl-tRNA synthetase family.

The protein localises to the cytoplasm. It carries out the reaction tRNA(Thr) + L-threonine + ATP = L-threonyl-tRNA(Thr) + AMP + diphosphate + H(+). This is Probable threonine--tRNA ligase, cytoplasmic from Encephalitozoon cuniculi (strain GB-M1) (Microsporidian parasite).